Here is a 656-residue protein sequence, read N- to C-terminus: DNA ligase (656 aa).

NAD(+) is bound by residues 32-36 and 81-82; these read DAVYD and SL. The N6-AMP-lysine intermediate role is filled by K112. Residues R133, E167, and K306 each coordinate NAD(+). Zn(2+)-binding residues include C400, C403, C416, and C421. Residues 577–656 enclose the BRCT domain; sequence KSSSVFNNKT…ELLKRLKELD (80 aa).

Belongs to the NAD-dependent DNA ligase family. LigA subfamily. Mg(2+) serves as cofactor. It depends on Mn(2+) as a cofactor.

The enzyme catalyses NAD(+) + (deoxyribonucleotide)n-3'-hydroxyl + 5'-phospho-(deoxyribonucleotide)m = (deoxyribonucleotide)n+m + AMP + beta-nicotinamide D-nucleotide.. In terms of biological role, DNA ligase that catalyzes the formation of phosphodiester linkages between 5'-phosphoryl and 3'-hydroxyl groups in double-stranded DNA using NAD as a coenzyme and as the energy source for the reaction. It is essential for DNA replication and repair of damaged DNA. The polypeptide is DNA ligase (Helicobacter pylori (strain P12)).